A 548-amino-acid polypeptide reads, in one-letter code: Beta-caryophyllene synthase (548 aa).

Residues arginine 268, aspartate 305, aspartate 309, arginine 446, and aspartate 449 each contribute to the (2E,6E)-farnesyl diphosphate site. Aspartate 305 and aspartate 309 together coordinate Mg(2+). The DDXXD motif motif lies at 305–309; sequence DDIYD. Mg(2+) contacts are provided by aspartate 449 and glutamate 457.

Belongs to the terpene synthase family. Mg(2+) is required as a cofactor.

The catalysed reaction is (2E,6E)-farnesyl diphosphate = (-)-(E)-beta-caryophyllene + diphosphate. It functions in the pathway secondary metabolite biosynthesis; terpenoid biosynthesis. Sesquiterpene synthase that catalyzes the formation of sesquiterpenes and sesquiterpenoid alcohols. Converts farnesyl diphosphate (FPP) to beta-caryophyllene. Can use geranyl diphosphate (GPP) to produce myrcene, limonene and camphene. This chain is Beta-caryophyllene synthase, found in Lavandula angustifolia (Lavender).